Here is a 77-residue protein sequence, read N- to C-terminus: Anionic peptide 17.1 (77 aa).

The signal sequence occupies residues 1–24; it reads MASKTVLVLLLVSVLVSTFCTAKA.

It belongs to the non-disulfide-bridged peptide (NDBP) superfamily. Long chain multifunctional peptide (group 2) family. Expressed by the venom gland.

Its subcellular location is the secreted. The protein is Anionic peptide 17.1 of Lychas mucronatus (Chinese swimming scorpion).